Consider the following 389-residue polypeptide: Tyrosine aminotransferase (389 aa).

Lysine 242 bears the N6-(pyridoxal phosphate)lysine mark.

It belongs to the class-I pyridoxal-phosphate-dependent aminotransferase family. In terms of assembly, homodimer. Pyridoxal 5'-phosphate is required as a cofactor.

It catalyses the reaction L-tyrosine + 2-oxoglutarate = 3-(4-hydroxyphenyl)pyruvate + L-glutamate. The protein operates within amino-acid degradation; L-phenylalanine degradation; acetoacetate and fumarate from L-phenylalanine: step 2/6. Transaminase involved in tyrosine breakdown. Converts tyrosine to p-hydroxyphenylpyruvate. This is Tyrosine aminotransferase (tatA) from Rhizobium meliloti (strain 1021) (Ensifer meliloti).